Consider the following 355-residue polypeptide: NADH-quinone oxidoreductase subunit H (355 aa).

8 helical membrane-spanning segments follow: residues 25 to 45, 91 to 111, 126 to 146, 170 to 190, 205 to 225, 253 to 273, 290 to 310, and 330 to 350; these read LVRI…LILW, WLYL…WAVI, LLYA…AGWA, MGFA…SEIV, FLSW…VSGI, MAFA…SALA, FIPG…VFIW, and VFLP…MSPL.

The protein belongs to the complex I subunit 1 family. In terms of assembly, NDH-1 is composed of 14 different subunits. Subunits NuoA, H, J, K, L, M, N constitute the membrane sector of the complex.

It localises to the cell inner membrane. It carries out the reaction a quinone + NADH + 5 H(+)(in) = a quinol + NAD(+) + 4 H(+)(out). Its function is as follows. NDH-1 shuttles electrons from NADH, via FMN and iron-sulfur (Fe-S) centers, to quinones in the respiratory chain. The immediate electron acceptor for the enzyme in this species is believed to be ubiquinone. Couples the redox reaction to proton translocation (for every two electrons transferred, four hydrogen ions are translocated across the cytoplasmic membrane), and thus conserves the redox energy in a proton gradient. This subunit may bind ubiquinone. This chain is NADH-quinone oxidoreductase subunit H, found in Burkholderia vietnamiensis (strain G4 / LMG 22486) (Burkholderia cepacia (strain R1808)).